The primary structure comprises 270 residues: LIM zinc-binding domain-containing Nebulette (270 aa).

The region spanning 3–63 (PQCARCGKVV…NAHYPKQSFT (61 aa)) is the LIM zinc-binding domain. Residues 61 to 95 (SFTTVADTPENLRLKQQSELQSQVKYKRDFEESKG) form a Nebulin 1 repeat. An Omega-N-methylarginine modification is found at arginine 96. One copy of the Nebulin 2 repeat lies at 97–131 (GFSIVTDTPELQRLKRTQEQISNVKYHEDFEKTKG). Position 132 is an omega-N-methylarginine (arginine 132). A Nebulin 3 repeat occupies 133 to 159 (GFTPVVDDPVTERVRKSTQVVSDAAYK). Residue threonine 135 is modified to Phosphothreonine. The SH3 domain maps to 210–270 (AHLRTYRAMY…LPANYIEFVN (61 aa)). A Phosphoserine modification is found at serine 230.

The protein localises to the cytoplasm. In terms of biological role, binds to actin and plays an important role in the assembly of the Z-disk. Isoform 2 might play a role in the assembly of focal adhesion. This Mus musculus (Mouse) protein is LIM zinc-binding domain-containing Nebulette (Nebl).